The primary structure comprises 584 residues: PE-PGRS family protein PE_PGRS11 (584 aa).

The PE domain maps to 1 to 92 (MSFVIVARDA…AATSYAVTEV (92 aa)). Catalysis depends on H290, which acts as the Tele-phosphohistidine intermediate. E365 acts as the Proton donor/acceptor in catalysis. The phosphoglycerate mutase stretch occupies residues 384–584 (YLVGPIAWTL…LPIGLPSLIP (201 aa)).

This sequence in the N-terminal section; belongs to the mycobacterial PE family. PGRS subfamily. The protein in the C-terminal section; belongs to the phosphoglycerate mutase family. In terms of assembly, interacts with human TLR2. The cofactor is Mg(2+).

The protein resides in the secreted. It localises to the cell wall. It is found in the cell surface. It carries out the reaction (2R)-2-phosphoglycerate = (2R)-3-phosphoglycerate. Functionally, induces maturation and activation of human dendritic cells (DCs), via TLR2-dependent activation of ERK1/2, p38 MAPK, and NF-kappa-B signaling pathways, and enhances the ability of DCs to stimulate CD4(+) T cells. By activating DCs, could potentially contribute to the initiation of innate immune responses during tuberculosis infection and hence regulate the clinical course of tuberculosis. Involved in resistance to oxidative stress, via TLR2-dependent activation of the PI3K-ERK1/2-NF-kappa-B signaling pathway and expression of COX-2 and Bcl2. Also abolishes H(2)O(2)-triggered activation of p38 MAPK. The polypeptide is PE-PGRS family protein PE_PGRS11 (Mycobacterium tuberculosis (strain ATCC 25618 / H37Rv)).